A 73-amino-acid chain; its full sequence is UPF0346 protein BLi02292/BL01432 (73 aa).

The protein belongs to the UPF0346 family.

This is UPF0346 protein BLi02292/BL01432 from Bacillus licheniformis (strain ATCC 14580 / DSM 13 / JCM 2505 / CCUG 7422 / NBRC 12200 / NCIMB 9375 / NCTC 10341 / NRRL NRS-1264 / Gibson 46).